The primary structure comprises 311 residues: Cytosolic Fe-S cluster assembly factor Nubp1 homolog (311 aa).

The segment at 1–21 (MQAPPPEHCPGVESEDAGKGS) is disordered. 4 residues coordinate [4Fe-4S] cluster: Cys-9, Cys-23, Cys-26, and Cys-32. ATP is bound at residue 63–70 (GKGGVGKS). [4Fe-4S] cluster contacts are provided by Cys-240 and Cys-243.

This sequence belongs to the Mrp/NBP35 ATP-binding proteins family. NUBP1/NBP35 subfamily. In terms of assembly, heterotetramer of 2 Nubp1 and 2 Nubp2 chains. Requires [4Fe-4S] cluster as cofactor.

The protein resides in the cytoplasm. In terms of biological role, component of the cytosolic iron-sulfur (Fe/S) protein assembly (CIA) machinery. Required for maturation of extramitochondrial Fe-S proteins. The Nubp1-Nubp2 heterotetramer forms a Fe-S scaffold complex, mediating the de novo assembly of an Fe-S cluster and its transfer to target apoproteins. The polypeptide is Cytosolic Fe-S cluster assembly factor Nubp1 homolog (Drosophila sechellia (Fruit fly)).